The following is a 187-amino-acid chain: Putative manganese efflux pump MntP (187 aa).

The next 6 helical transmembrane spans lie at 3-23 (MSATLILAFAMSMDAFAASIG), 41-61 (LIFGVIEAITPLIGWALGFFA), 62-82 (SQYILEWDHWVAFTLLLILGG), 107-129 (LLVCTAIATSLDAMAIGVGLAFL), 143-163 (ATMIMVTLGMMIGRYIGPILG), and 166-186 (AEIIGGLVLIGIGCNILYEHL).

This sequence belongs to the MntP (TC 9.B.29) family.

Its subcellular location is the cell inner membrane. Functionally, probably functions as a manganese efflux pump. The polypeptide is Putative manganese efflux pump MntP (Pectobacterium atrosepticum (strain SCRI 1043 / ATCC BAA-672) (Erwinia carotovora subsp. atroseptica)).